The primary structure comprises 189 residues: Elongation factor P (189 aa).

This sequence belongs to the elongation factor P family.

The protein resides in the cytoplasm. It participates in protein biosynthesis; polypeptide chain elongation. Its function is as follows. Involved in peptide bond synthesis. Stimulates efficient translation and peptide-bond synthesis on native or reconstituted 70S ribosomes in vitro. Probably functions indirectly by altering the affinity of the ribosome for aminoacyl-tRNA, thus increasing their reactivity as acceptors for peptidyl transferase. This Rhizobium rhizogenes (strain K84 / ATCC BAA-868) (Agrobacterium radiobacter) protein is Elongation factor P.